A 627-amino-acid polypeptide reads, in one-letter code: 5-aminolevulinate synthase, non-specific, mitochondrial (627 aa).

The transit peptide at 1–58 (MDVIVRRCPFLARVPQAFFQQSKKSLAVYAQRCPFMMELASKPMAPSLARALCSSSSS) directs the protein to the mitochondrion. Positions 204, 321, and 340 each coordinate substrate. The pyridoxal 5'-phosphate site is built by Ser373, His401, and Thr429. Lys432 is a catalytic residue. N6-(pyridoxal phosphate)lysine is present on Lys432. Positions 461 and 462 each coordinate pyridoxal 5'-phosphate. Thr549 contacts substrate.

This sequence belongs to the class-II pyridoxal-phosphate-dependent aminotransferase family. As to quaternary structure, homodimer. Pyridoxal 5'-phosphate is required as a cofactor.

Its subcellular location is the mitochondrion inner membrane. The catalysed reaction is succinyl-CoA + glycine + H(+) = 5-aminolevulinate + CO2 + CoA. The protein operates within porphyrin-containing compound metabolism; protoporphyrin-IX biosynthesis; 5-aminolevulinate from glycine: step 1/1. In terms of biological role, catalyzes the pyridoxal 5'-phosphate (PLP)-dependent condensation of succinyl-CoA and glycine to form aminolevulinic acid (ALA), with CoA and CO2 as by-products. The chain is 5-aminolevulinate synthase, non-specific, mitochondrial (alas1) from Opsanus tau (Oyster toadfish).